Here is a 230-residue protein sequence, read N- to C-terminus: Thymidylate synthase 1 (230 aa).

DUMP is bound at residue 92-93 (RR). Cys112 functions as the Nucleophile in the catalytic mechanism. Residues 132–135 (RSND), Asn143, and 173–175 (HVY) contribute to the dUMP site. Asp135 is a binding site for (6R)-5,10-methylene-5,6,7,8-tetrahydrofolate.

Belongs to the thymidylate synthase family. Bacterial-type ThyA subfamily. As to quaternary structure, homodimer.

It localises to the cytoplasm. The enzyme catalyses dUMP + (6R)-5,10-methylene-5,6,7,8-tetrahydrofolate = 7,8-dihydrofolate + dTMP. It functions in the pathway pyrimidine metabolism; dTTP biosynthesis. Its function is as follows. Catalyzes the reductive methylation of 2'-deoxyuridine-5'-monophosphate (dUMP) to 2'-deoxythymidine-5'-monophosphate (dTMP) while utilizing 5,10-methylenetetrahydrofolate (mTHF) as the methyl donor and reductant in the reaction, yielding dihydrofolate (DHF) as a by-product. This enzymatic reaction provides an intracellular de novo source of dTMP, an essential precursor for DNA biosynthesis. The sequence is that of Thymidylate synthase 1 from Bacillus amyloliquefaciens (Bacillus velezensis).